The primary structure comprises 360 residues: METITVGLDERSYPIFFNVNELSMLGSLCADQKLGQRVAVVTNPTVGAWYFEPVRESLVSAGFSVHKIEVPDGEEYKNSDTLKDIYDWLIDFGLDRGSFIVALGGGVIGDMAGYAAATYLRGIPFVQVPTTLLAQVDSSVGGKTGINHEKGKNLIGAFYQPRLVMIDVAVLDTLAEREYLSGLAEMAKYGVVLDAEFFRFMYDNVEKLLSRDKECLLAAVKRSCALKASVVEQDEREGGLRAVLNYGHTIGHAVETLTGYRQYLHGEAVAIGMAQAAKISESMGFSSSDDTERVLSLLSKLKLPQDLPPFSPSEYIEAICHDKKVRDGGLNFVFNKNLGSFTIATVADVSQLLRICGIGE.

Residues 72 to 77 (DGEEYK), 106 to 110 (GVIGD), 130 to 131 (TT), lysine 143, and lysine 152 contribute to the NAD(+) site. Zn(2+) contacts are provided by glutamate 185, histidine 248, and histidine 265.

This sequence belongs to the sugar phosphate cyclases superfamily. Dehydroquinate synthase family. It depends on Co(2+) as a cofactor. Requires Zn(2+) as cofactor. The cofactor is NAD(+).

It is found in the cytoplasm. The catalysed reaction is 7-phospho-2-dehydro-3-deoxy-D-arabino-heptonate = 3-dehydroquinate + phosphate. It functions in the pathway metabolic intermediate biosynthesis; chorismate biosynthesis; chorismate from D-erythrose 4-phosphate and phosphoenolpyruvate: step 2/7. Functionally, catalyzes the conversion of 3-deoxy-D-arabino-heptulosonate 7-phosphate (DAHP) to dehydroquinate (DHQ). This is 3-dehydroquinate synthase from Geotalea uraniireducens (strain Rf4) (Geobacter uraniireducens).